The sequence spans 384 residues: Chaperone protein DnaJ (384 aa).

Residues 4 to 68 (DFYDVLGVSR…EKRQMYDQLG (65 aa)) form the J domain. Disordered stretches follow at residues 74–105 (QAQK…GMGG) and 113–132 (NNLF…QGRD). Residues 79–105 (GAGGGGGGRGQGNPFGGGGNPFGGMGG) are compositionally biased toward gly residues. Residues 147–229 (GVERDVTIRR…CRGSGRVRRT (83 aa)) form a CR-type zinc finger. Residues Cys-160, Cys-163, Cys-177, Cys-180, Cys-203, Cys-206, Cys-217, and Cys-220 each contribute to the Zn(2+) site. 4 CXXCXGXG motif repeats span residues 160–167 (CPECDGEG), 177–184 (CSECNGSG), 203–210 (CRACGGEG), and 217–224 (CSECRGSG).

Belongs to the DnaJ family. As to quaternary structure, homodimer. The cofactor is Zn(2+).

Its subcellular location is the cytoplasm. In terms of biological role, participates actively in the response to hyperosmotic and heat shock by preventing the aggregation of stress-denatured proteins and by disaggregating proteins, also in an autonomous, DnaK-independent fashion. Unfolded proteins bind initially to DnaJ; upon interaction with the DnaJ-bound protein, DnaK hydrolyzes its bound ATP, resulting in the formation of a stable complex. GrpE releases ADP from DnaK; ATP binding to DnaK triggers the release of the substrate protein, thus completing the reaction cycle. Several rounds of ATP-dependent interactions between DnaJ, DnaK and GrpE are required for fully efficient folding. Also involved, together with DnaK and GrpE, in the DNA replication of plasmids through activation of initiation proteins. The chain is Chaperone protein DnaJ from Haloferax mediterranei (strain ATCC 33500 / DSM 1411 / JCM 8866 / NBRC 14739 / NCIMB 2177 / R-4) (Halobacterium mediterranei).